The following is a 693-amino-acid chain: DNA ligase (693 aa).

NAD(+) is bound by residues 40–44 (DSEYD), 89–90 (SL), and Glu121. The active-site N6-AMP-lysine intermediate is Lys123. 4 residues coordinate NAD(+): Arg144, Glu179, Lys295, and Lys319. Residues Cys413, Cys416, Cys431, and Cys437 each coordinate Zn(2+). The BRCT domain occupies 610–693 (REQNILTGKI…AFIKCLEKEV (84 aa)).

Belongs to the NAD-dependent DNA ligase family. LigA subfamily. Mg(2+) is required as a cofactor. It depends on Mn(2+) as a cofactor.

The enzyme catalyses NAD(+) + (deoxyribonucleotide)n-3'-hydroxyl + 5'-phospho-(deoxyribonucleotide)m = (deoxyribonucleotide)n+m + AMP + beta-nicotinamide D-nucleotide.. Its function is as follows. DNA ligase that catalyzes the formation of phosphodiester linkages between 5'-phosphoryl and 3'-hydroxyl groups in double-stranded DNA using NAD as a coenzyme and as the energy source for the reaction. It is essential for DNA replication and repair of damaged DNA. This is DNA ligase from Rickettsia typhi (strain ATCC VR-144 / Wilmington).